The primary structure comprises 425 residues: Elongation factor 1-alpha (425 aa).

The tr-type G domain maps to 5–221 (KPHMNLAVIG…NALSEPEKPT (217 aa)). The segment at 14–21 (GHIDHGKS) is G1. 14 to 21 (GHIDHGKS) contacts GTP. Ser-21 contributes to the Mg(2+) binding site. The G2 stretch occupies residues 70–74 (GITID). The G3 stretch occupies residues 91-94 (DCPG). Residues 91–95 (DCPGH) and 146–149 (NKMD) contribute to the GTP site. Positions 146–149 (NKMD) are G4. The interval 185-187 (SAF) is G5.

Belongs to the TRAFAC class translation factor GTPase superfamily. Classic translation factor GTPase family. EF-Tu/EF-1A subfamily.

Its subcellular location is the cytoplasm. It carries out the reaction GTP + H2O = GDP + phosphate + H(+). GTP hydrolase that promotes the GTP-dependent binding of aminoacyl-tRNA to the A-site of ribosomes during protein biosynthesis. In Methanoculleus marisnigri (strain ATCC 35101 / DSM 1498 / JR1), this protein is Elongation factor 1-alpha.